A 197-amino-acid chain; its full sequence is uncharacterized protein (197 aa).

A helical transmembrane segment spans residues 150-172 (SLKLNTTLPMFALNLICLLRSIL).

It localises to the membrane. This is an uncharacterized protein from Saccharomyces cerevisiae (strain ATCC 204508 / S288c) (Baker's yeast).